Here is a 506-residue protein sequence, read N- to C-terminus: MSEQQPQAPDAALELNNELKARREKLVALRATGLAFPNDFRRDRTSDQLHAEFDGKENEELEALGIEVSVAGRMMTRRIMGKASFVTLQDVGGRIQLYVSRDDLAEGIYNEQFKKWDLGDILGARGKLFKTKTGELSIHCSELRLLTKALRPLPDKFHGLADQETRYRQRYLDLIANDDSRNTFKIRSQIMAGIRSFMVDRDFMEVETPMMQAIPGGASARPFITHHNALDLDMYLRIAPELYLKRLVVGGFDRVFEINRNFRNEGISPRHNPEFTMMELYMAYADYKDLIELTESLFRTLAQDVLGSTVVPYGDQQFDFGKPFEKLTMKEAILKYRPQTDLADLADFDKSVAIAQSLGIKVEKSWGLGRLVTEIFEETAEAHLIQPTFITEYPAEVSPLARRNDMDPEITDRFEFFIGGREIGNGFSELNDAQDQAERFLQQVNAKDAGDDEAMFYDEDYVTALEHGLPPTAGLGIGIDRMVMLFTNSHTIRDVILFPALRPGSK.

2 residues coordinate Mg(2+): glutamate 415 and glutamate 422.

Belongs to the class-II aminoacyl-tRNA synthetase family. Homodimer. Mg(2+) serves as cofactor.

The protein localises to the cytoplasm. The enzyme catalyses tRNA(Lys) + L-lysine + ATP = L-lysyl-tRNA(Lys) + AMP + diphosphate. In Erwinia tasmaniensis (strain DSM 17950 / CFBP 7177 / CIP 109463 / NCPPB 4357 / Et1/99), this protein is Lysine--tRNA ligase.